The primary structure comprises 241 residues: Sugar fermentation stimulation protein homolog (241 aa).

This sequence belongs to the SfsA family.

The chain is Sugar fermentation stimulation protein homolog from Trichormus variabilis (strain ATCC 29413 / PCC 7937) (Anabaena variabilis).